A 364-amino-acid chain; its full sequence is MLIFPLINDTSRKIIHIDMDAFFAAVEERDNPALKGKPVVIGKDPRETGGRGVVSTCNYEARKYGIHSAMSSKEAYERCPKAIFISGNYEKYRTVGDQIRRIFKRYTDLVEPMSIDEAYLDVTDNKLGIKSAVKIAKLIQHDIWKEVGLTCSAGVSYNKFLAKLASDFEKPHGLTLVLKEDALCFLAKLPIEKFHGVGKKSVEKLHDMGIYTGQDLLAVPEMTLIDHFGRFGFDLYRKARGISNSPVKSDRIRKSIGSERTYAKLLYQETDIKAEISKNAKRVAALLQDHKKLGKTIVLKVRYADFTTLTKRVTLPELTRNAAQIEQVAGDIFDSLSENPAGIRLLGVTMTNLEDKVADISLNL.

One can recognise a UmuC domain in the interval I14–G198. Mg(2+)-binding residues include D18 and D116. E117 is an active-site residue.

It belongs to the DNA polymerase type-Y family. As to quaternary structure, monomer. The cofactor is Mg(2+).

The protein localises to the cytoplasm. The catalysed reaction is DNA(n) + a 2'-deoxyribonucleoside 5'-triphosphate = DNA(n+1) + diphosphate. Its function is as follows. Poorly processive, error-prone DNA polymerase involved in untargeted mutagenesis. Copies undamaged DNA at stalled replication forks, which arise in vivo from mismatched or misaligned primer ends. These misaligned primers can be extended by PolIV. Exhibits no 3'-5' exonuclease (proofreading) activity. May be involved in translesional synthesis, in conjunction with the beta clamp from PolIII. The sequence is that of DNA polymerase IV from Streptococcus pyogenes serotype M5 (strain Manfredo).